The primary structure comprises 320 residues: Aspartate carbamoyltransferase catalytic subunit (320 aa).

Residues Arg65 and Thr66 each coordinate carbamoyl phosphate. Lys93 serves as a coordination point for L-aspartate. Positions 115, 143, and 146 each coordinate carbamoyl phosphate. Residues Arg176 and Arg230 each contribute to the L-aspartate site. Positions 271 and 272 each coordinate carbamoyl phosphate.

Belongs to the aspartate/ornithine carbamoyltransferase superfamily. ATCase family. As to quaternary structure, heterododecamer (2C3:3R2) of six catalytic PyrB chains organized as two trimers (C3), and six regulatory PyrI chains organized as three dimers (R2).

It carries out the reaction carbamoyl phosphate + L-aspartate = N-carbamoyl-L-aspartate + phosphate + H(+). The protein operates within pyrimidine metabolism; UMP biosynthesis via de novo pathway; (S)-dihydroorotate from bicarbonate: step 2/3. Catalyzes the condensation of carbamoyl phosphate and aspartate to form carbamoyl aspartate and inorganic phosphate, the committed step in the de novo pyrimidine nucleotide biosynthesis pathway. This is Aspartate carbamoyltransferase catalytic subunit from Maricaulis maris (strain MCS10) (Caulobacter maris).